Reading from the N-terminus, the 472-residue chain is F420-non-reducing hydrogenase subunit A (472 aa).

Ni(2+)-binding residues include C61, C64, C442, and C445.

This sequence belongs to the [NiFe]/[NiFeSe] hydrogenase large subunit family. As to quaternary structure, the F420-non-reducing hydrogenase is composed of three subunits; MvhA, MvhD and MvhG. It forms a complex with the heterodisulfide reductase (hdr). Ni(2+) is required as a cofactor.

Part of a complex that provides reducing equivalents for heterodisulfide reductase. The chain is F420-non-reducing hydrogenase subunit A (mvhA) from Methanothermobacter thermautotrophicus (strain ATCC 29096 / DSM 1053 / JCM 10044 / NBRC 100330 / Delta H) (Methanobacterium thermoautotrophicum).